A 209-amino-acid polypeptide reads, in one-letter code: MNNDDIILAEMRPKKRAGRRVFKETRHPVYRGIRRRNGDKWVCEVREPTHQRRIWLGTYPTADMAARAHDVAVLALRGRSACLNFADSAWRLPVPESNDPDVIRRVAAEAAEMFRPVDLESGITVLPCAGDDVDLGFGSGSGSGSGSEERNSSSYGFGDYEEVSTTMMRLAEGPLMSPPRSYMEDMTPTNVYTEEEMCYEDMSLWSYRY.

Positions 14-26 match the Nuclear localization signal motif; sequence KKRAGRRVFKETR. The AP2/ERF DNA-binding region spans 29–86; the sequence is VYRGIRRRNGDKWVCEVREPTHQRRIWLGTYPTADMAARAHDVAVLALRGRSACLNFA. Residues 137-157 are disordered; the sequence is FGSGSGSGSGSEERNSSSYGF.

It belongs to the AP2/ERF transcription factor family. ERF subfamily.

Its subcellular location is the nucleus. Transcriptional activator that binds specifically to the DNA sequence 5'-[AG]CCGAC-3'. Binding to the C-repeat/DRE element mediates cold or dehydration-inducible transcription. CBF/DREB1 factors play a key role in freezing tolerance and cold acclimation. This chain is Dehydration-responsive element-binding protein 1F (DREB1F), found in Arabidopsis thaliana (Mouse-ear cress).